The primary structure comprises 116 residues: Iron-sulfur cluster insertion protein ErpA (116 aa).

Positions 44, 108, and 110 each coordinate iron-sulfur cluster.

It belongs to the HesB/IscA family. In terms of assembly, homodimer. Iron-sulfur cluster is required as a cofactor.

Functionally, required for insertion of 4Fe-4S clusters for at least IspG. This chain is Iron-sulfur cluster insertion protein ErpA, found in Pseudomonas entomophila (strain L48).